The sequence spans 846 residues: Choline trimethylamine-lyase (846 aa).

In terms of domain architecture, PFL spans 60–718 (PRHVKLKENF…LLGASANGRR (659 aa)). The Cysteine radical intermediate role is filled by cysteine 489. Catalysis depends on glutamate 491, which acts as the Proton acceptor. The 122-residue stretch at 725–846 (DGISPTQGAD…IISRTMLHGF (122 aa)) folds into the Glycine radical domain. At glycine 821 the chain carries Glycine radical.

Belongs to the glycyl radical enzyme (GRE) family. CutC subfamily. As to quaternary structure, homodimer. In terms of processing, requires the activating protein CutD to generate the key active site glycyl radical on Gly-821 that is involved in catalysis.

The enzyme catalyses choline = trimethylamine + acetaldehyde. The protein operates within amine and polyamine metabolism; choline degradation. In terms of biological role, glycine radical enzyme that catalyzes the cleavage of a C-N bond in choline, producing trimethylamine (TMA) and acetaldehyde. Is involved in the anaerobic choline utilization pathway that allows D.alaskensis to grow on choline as a source of carbon and energy. Is strictly specific for choline as substrate. In Oleidesulfovibrio alaskensis (strain ATCC BAA-1058 / DSM 17464 / G20) (Desulfovibrio alaskensis), this protein is Choline trimethylamine-lyase.